The primary structure comprises 197 residues: 7-methyl-GTP pyrophosphatase (197 aa).

The active-site Proton acceptor is D72.

The protein belongs to the Maf family. YceF subfamily. A divalent metal cation serves as cofactor.

It is found in the cytoplasm. It catalyses the reaction N(7)-methyl-GTP + H2O = N(7)-methyl-GMP + diphosphate + H(+). Its function is as follows. Nucleoside triphosphate pyrophosphatase that hydrolyzes 7-methyl-GTP (m(7)GTP). May have a dual role in cell division arrest and in preventing the incorporation of modified nucleotides into cellular nucleic acids. In Bordetella avium (strain 197N), this protein is 7-methyl-GTP pyrophosphatase.